We begin with the raw amino-acid sequence, 129 residues long: Large ribosomal subunit protein bL20 (129 aa).

It belongs to the bacterial ribosomal protein bL20 family.

Binds directly to 23S ribosomal RNA and is necessary for the in vitro assembly process of the 50S ribosomal subunit. It is not involved in the protein synthesizing functions of that subunit. This chain is Large ribosomal subunit protein bL20, found in Mycolicibacterium gilvum (strain PYR-GCK) (Mycobacterium gilvum (strain PYR-GCK)).